The chain runs to 142 residues: Deoxyuridine 5'-triphosphate nucleotidohydrolase (142 aa).

Substrate contacts are provided by residues Arg-62 to Gly-64, Asn-75, and Thr-79 to Asp-81.

The protein belongs to the dUTPase family. Mg(2+) is required as a cofactor.

It catalyses the reaction dUTP + H2O = dUMP + diphosphate + H(+). The protein operates within pyrimidine metabolism; dUMP biosynthesis; dUMP from dCTP (dUTP route): step 2/2. This enzyme is involved in nucleotide metabolism: it produces dUMP, the immediate precursor of thymidine nucleotides and it decreases the intracellular concentration of dUTP so that uracil cannot be incorporated into DNA. The chain is Deoxyuridine 5'-triphosphate nucleotidohydrolase from Picosynechococcus sp. (strain ATCC 27264 / PCC 7002 / PR-6) (Agmenellum quadruplicatum).